The sequence spans 185 residues: Ribosome-recycling factor (185 aa).

Belongs to the RRF family.

The protein resides in the cytoplasm. Functionally, responsible for the release of ribosomes from messenger RNA at the termination of protein biosynthesis. May increase the efficiency of translation by recycling ribosomes from one round of translation to another. The protein is Ribosome-recycling factor of Acidothermus cellulolyticus (strain ATCC 43068 / DSM 8971 / 11B).